Here is a 340-residue protein sequence, read N- to C-terminus: Conidiation-specific protein 13 (340 aa).

The segment at 313 to 340 is disordered; sequence AEAAAGISSGKPAADRKTKGKKGTKFRV. Over residues 330-340 the composition is skewed to basic residues; that stretch reads TKGKKGTKFRV.

This is Conidiation-specific protein 13 (con-13) from Neurospora crassa (strain ATCC 24698 / 74-OR23-1A / CBS 708.71 / DSM 1257 / FGSC 987).